The primary structure comprises 119 residues: Beta-2-microglobulin (119 aa).

The signal sequence occupies residues Met-1 to Ala-20. The Ig-like C1-type domain maps to Pro-25–Lys-114.

It belongs to the beta-2-microglobulin family. In terms of assembly, heterodimer of an alpha chain and a beta chain. Beta-2-microglobulin is the beta-chain of major histocompatibility complex class I molecules.

The protein localises to the secreted. Component of the class I major histocompatibility complex (MHC). Involved in the presentation of peptide antigens to the immune system. This is Beta-2-microglobulin (B2M) from Brachyteles arachnoides (Southern muriqui).